The chain runs to 1204 residues: DNA-directed RNA polymerase subunit beta' (1204 aa).

Residues Cys60, Cys62, Cys75, and Cys78 each contribute to the Zn(2+) site. Mg(2+) is bound by residues Asp449, Asp451, and Asp453. Zn(2+) is bound by residues Cys819, Cys893, Cys900, and Cys903.

Belongs to the RNA polymerase beta' chain family. The RNAP catalytic core consists of 2 alpha, 1 beta, 1 beta' and 1 omega subunit. When a sigma factor is associated with the core the holoenzyme is formed, which can initiate transcription. It depends on Mg(2+) as a cofactor. The cofactor is Zn(2+).

It carries out the reaction RNA(n) + a ribonucleoside 5'-triphosphate = RNA(n+1) + diphosphate. Functionally, DNA-dependent RNA polymerase catalyzes the transcription of DNA into RNA using the four ribonucleoside triphosphates as substrates. In Bacillus cytotoxicus (strain DSM 22905 / CIP 110041 / 391-98 / NVH 391-98), this protein is DNA-directed RNA polymerase subunit beta'.